Consider the following 252-residue polypeptide: Isoprenyl transferase 2 (252 aa).

Residue D26 is part of the active site. D26 contacts Mg(2+). Residues 27–30, W31, R39, H43, and 71–73 contribute to the substrate site; these read GNGR and SSE. The Proton acceptor role is filled by N74. Substrate contacts are provided by residues W75, R77, R194, and 200–202; that span reads RLS. Position 213 (E213) interacts with Mg(2+).

It belongs to the UPP synthase family. As to quaternary structure, homodimer. Requires Mg(2+) as cofactor.

Its function is as follows. Catalyzes the condensation of isopentenyl diphosphate (IPP) with allylic pyrophosphates generating different type of terpenoids. This is Isoprenyl transferase 2 from Bradyrhizobium diazoefficiens (strain JCM 10833 / BCRC 13528 / IAM 13628 / NBRC 14792 / USDA 110).